A 371-amino-acid chain; its full sequence is Transcription termination/antitermination protein NusA (371 aa).

The region spanning 135–199 is the S1 motif domain; that stretch reads EDIMTGIVQR…KGPQIYVSRT (65 aa). In terms of domain architecture, KH spans 301–367; the sequence is EKATTVIVPD…EPLFTEPETA (67 aa). Positions 347–371 are disordered; the sequence is GIYPRELEEDDEPLFTEPETAESDE. Over residues 353–371 the composition is skewed to acidic residues; that stretch reads LEEDDEPLFTEPETAESDE.

Belongs to the NusA family. Monomer. Binds directly to the core enzyme of the DNA-dependent RNA polymerase and to nascent RNA.

It localises to the cytoplasm. In terms of biological role, participates in both transcription termination and antitermination. The sequence is that of Transcription termination/antitermination protein NusA from Bacillus subtilis (strain 168).